A 183-amino-acid polypeptide reads, in one-letter code: MVPRLKSKYEKEIRPTLQKSLGFQSVMRVPKLEKIVINVGMGEAHTNPKAMEACLVEIGQITGQRPVKTFAKKSIAGFKVREGMVLGCKVTLRGHHMYEFLDRFINVALPRVRDFRGVNPKGFDGRGNYNLSVREQIIFPEIQFDKINTIYGINITFVTNTEVDKEAFELFQAFGMPYRTAGK.

Belongs to the universal ribosomal protein uL5 family. In terms of assembly, part of the 50S ribosomal subunit; part of the 5S rRNA/L5/L18/L25 subcomplex. Contacts the 5S rRNA and the P site tRNA. Forms a bridge to the 30S subunit in the 70S ribosome.

Its function is as follows. This is one of the proteins that bind and probably mediate the attachment of the 5S RNA into the large ribosomal subunit, where it forms part of the central protuberance. In the 70S ribosome it contacts protein S13 of the 30S subunit (bridge B1b), connecting the 2 subunits; this bridge is implicated in subunit movement. Contacts the P site tRNA; the 5S rRNA and some of its associated proteins might help stabilize positioning of ribosome-bound tRNAs. The polypeptide is Large ribosomal subunit protein uL5 (Leptospira biflexa serovar Patoc (strain Patoc 1 / Ames)).